We begin with the raw amino-acid sequence, 464 residues long: Argininosuccinate lyase (464 aa).

It belongs to the lyase 1 family. Argininosuccinate lyase subfamily.

It is found in the cytoplasm. It catalyses the reaction 2-(N(omega)-L-arginino)succinate = fumarate + L-arginine. It functions in the pathway amino-acid biosynthesis; L-arginine biosynthesis; L-arginine from L-ornithine and carbamoyl phosphate: step 3/3. This Pseudomonas fluorescens (strain SBW25) protein is Argininosuccinate lyase.